Reading from the N-terminus, the 418-residue chain is Glutamyl-tRNA reductase (418 aa).

Residues 49-52 (TCNR), Ser109, 114-116 (EPQ), and Gln120 contribute to the substrate site. Cys50 serves as the catalytic Nucleophile. 189–194 (GAGETI) serves as a coordination point for NADP(+).

The protein belongs to the glutamyl-tRNA reductase family. In terms of assembly, homodimer.

It carries out the reaction (S)-4-amino-5-oxopentanoate + tRNA(Glu) + NADP(+) = L-glutamyl-tRNA(Glu) + NADPH + H(+). Its pathway is porphyrin-containing compound metabolism; protoporphyrin-IX biosynthesis; 5-aminolevulinate from L-glutamyl-tRNA(Glu): step 1/2. Functionally, catalyzes the NADPH-dependent reduction of glutamyl-tRNA(Glu) to glutamate 1-semialdehyde (GSA). This Klebsiella pneumoniae subsp. pneumoniae (strain ATCC 700721 / MGH 78578) protein is Glutamyl-tRNA reductase.